A 194-amino-acid polypeptide reads, in one-letter code: Leucyl/phenylalanyl-tRNA--protein transferase (194 aa).

The protein belongs to the L/F-transferase family.

The protein resides in the cytoplasm. It carries out the reaction N-terminal L-lysyl-[protein] + L-leucyl-tRNA(Leu) = N-terminal L-leucyl-L-lysyl-[protein] + tRNA(Leu) + H(+). It catalyses the reaction N-terminal L-arginyl-[protein] + L-leucyl-tRNA(Leu) = N-terminal L-leucyl-L-arginyl-[protein] + tRNA(Leu) + H(+). The catalysed reaction is L-phenylalanyl-tRNA(Phe) + an N-terminal L-alpha-aminoacyl-[protein] = an N-terminal L-phenylalanyl-L-alpha-aminoacyl-[protein] + tRNA(Phe). In terms of biological role, functions in the N-end rule pathway of protein degradation where it conjugates Leu, Phe and, less efficiently, Met from aminoacyl-tRNAs to the N-termini of proteins containing an N-terminal arginine or lysine. The chain is Leucyl/phenylalanyl-tRNA--protein transferase from Chlorobaculum tepidum (strain ATCC 49652 / DSM 12025 / NBRC 103806 / TLS) (Chlorobium tepidum).